A 157-amino-acid chain; its full sequence is Small ribosomal subunit protein uS7 (157 aa).

It belongs to the universal ribosomal protein uS7 family. As to quaternary structure, part of the 30S ribosomal subunit. Contacts proteins S9 and S11.

One of the primary rRNA binding proteins, it binds directly to 16S rRNA where it nucleates assembly of the head domain of the 30S subunit. Is located at the subunit interface close to the decoding center, probably blocks exit of the E-site tRNA. The polypeptide is Small ribosomal subunit protein uS7 (Bdellovibrio bacteriovorus (strain ATCC 15356 / DSM 50701 / NCIMB 9529 / HD100)).